The chain runs to 44 residues: Photosystem I reaction center subunit IX (44 aa).

A helical transmembrane segment spans residues 7–27 (YLSVAPVLTTLWFGSLAGLLI).

The protein belongs to the PsaJ family.

Its subcellular location is the plastid. It localises to the chloroplast thylakoid membrane. Its function is as follows. May help in the organization of the PsaE and PsaF subunits. This is Photosystem I reaction center subunit IX from Liriodendron tulipifera (Tuliptree).